Here is a 424-residue protein sequence, read N- to C-terminus: Glutamate-1-semialdehyde 2,1-aminomutase (424 aa).

Lys266 carries the N6-(pyridoxal phosphate)lysine modification.

The protein belongs to the class-III pyridoxal-phosphate-dependent aminotransferase family. HemL subfamily. Homodimer. It depends on pyridoxal 5'-phosphate as a cofactor.

It is found in the cytoplasm. It carries out the reaction (S)-4-amino-5-oxopentanoate = 5-aminolevulinate. It participates in porphyrin-containing compound metabolism; protoporphyrin-IX biosynthesis; 5-aminolevulinate from L-glutamyl-tRNA(Glu): step 2/2. This chain is Glutamate-1-semialdehyde 2,1-aminomutase, found in Thermus thermophilus (strain ATCC 27634 / DSM 579 / HB8).